The sequence spans 432 residues: Glutamyl-tRNA reductase (432 aa).

Residues 49–52 (TCNR), Ser101, 106–108 (EPQ), and Gln112 contribute to the substrate site. The active-site Nucleophile is the Cys50. Residue 181–186 (GAGETI) participates in NADP(+) binding. The disordered stretch occupies residues 408–432 (PEKPGYRHPPVATPIVRTDDANPAP).

The protein belongs to the glutamyl-tRNA reductase family. Homodimer.

The catalysed reaction is (S)-4-amino-5-oxopentanoate + tRNA(Glu) + NADP(+) = L-glutamyl-tRNA(Glu) + NADPH + H(+). It functions in the pathway porphyrin-containing compound metabolism; protoporphyrin-IX biosynthesis; 5-aminolevulinate from L-glutamyl-tRNA(Glu): step 1/2. In terms of biological role, catalyzes the NADPH-dependent reduction of glutamyl-tRNA(Glu) to glutamate 1-semialdehyde (GSA). This Xanthomonas campestris pv. campestris (strain B100) protein is Glutamyl-tRNA reductase.